The primary structure comprises 194 residues: Adenylate kinase isoenzyme 1 (194 aa).

An N-acetylalanine modification is found at Ala2. ATP is bound at residue 18-23 (GSGKGT). The segment at 38-67 (SSGDLLRAEVASGSERGKQLQAIMQKGELV) is NMP. AMP contacts are provided by residues Ser39, Arg44, 65-67 (ELV), 94-97 (GYPR), and Gln101. The LID stretch occupies residues 131–141 (KRGQTSGRSDD). An ATP-binding site is contributed by Arg132. AMP contacts are provided by Arg138 and Arg149. Residue Leu177 coordinates ATP.

Belongs to the adenylate kinase family. AK1 subfamily. In terms of assembly, monomer. Mg(2+) serves as cofactor.

The protein localises to the cytoplasm. The catalysed reaction is a ribonucleoside 5'-phosphate + ATP = a ribonucleoside 5'-diphosphate + ADP. The enzyme catalyses AMP + ATP = 2 ADP. It catalyses the reaction dAMP + ATP = dADP + ADP. It carries out the reaction dATP + AMP = dADP + ADP. The catalysed reaction is dAMP + dATP = 2 dADP. The enzyme catalyses a 2'-deoxyribonucleoside 5'-diphosphate + ATP = a 2'-deoxyribonucleoside 5'-triphosphate + ADP. It catalyses the reaction a ribonucleoside 5'-diphosphate + ATP = a ribonucleoside 5'-triphosphate + ADP. It carries out the reaction CDP + GTP = CTP + GDP. The catalysed reaction is GDP + ATP = GTP + ADP. The enzyme catalyses UDP + ATP = UTP + ADP. It catalyses the reaction GTP + UDP = UTP + GDP. It carries out the reaction dTDP + GTP = dTTP + GDP. The catalysed reaction is dCDP + GTP = dCTP + GDP. The enzyme catalyses dGDP + ATP = dGTP + ADP. It catalyses the reaction dADP + GTP = dATP + GDP. It carries out the reaction thiamine diphosphate + ADP = thiamine triphosphate + AMP. Catalyzes the reversible transfer of the terminal phosphate group between ATP and AMP. Also displays broad nucleoside diphosphate kinase activity. Plays an important role in cellular energy homeostasis and in adenine nucleotide metabolism. Also catalyzes at a very low rate the synthesis of thiamine triphosphate (ThTP) from thiamine diphosphate (ThDP) and ADP. In Cyprinus carpio (Common carp), this protein is Adenylate kinase isoenzyme 1 (ak1).